The following is a 603-amino-acid chain: Leucine-rich repeat-containing protein 40 (603 aa).

The interval 1–27 (MAAARRARAGDPRAGFRRAAEEQSPAV) is disordered. 20 LRR repeats span residues 83 to 104 (DLTKLILASNQLRCLSEDVRLL), 106 to 127 (ALTVLDVHDNQLTSLPSALGQL), 129 to 150 (NLQKLDVSHNKLKSIPEELLQL), 152 to 173 (HLKGLLLQHNELSHLPDGFGQL), 175 to 196 (SLEELDLSNNHLTDIPKSFALL), 198 to 219 (NLVRLNLACNQLKDLPADISAM), 221 to 242 (SLRQLDCTKNYLESVPSELASM), 244 to 265 (SLEQLYLRKNKLRSLPELPSCK), 266 to 286 (LLKELHAGENQIEILNAENLK), 290 to 311 (SLSVLELRDNKIKSVPDEITLL), 313 to 335 (KLERLDLANNDISRLPYTLGNLS), 336 to 357 (QLKFLALEGNPLRTIRRDLLQK), 401 to 422 (TLKLLDYSEKQVAVIPDDVFSA), 427 to 449 (PVTSVNFSKNQLTAIPPRIVELK), 451 to 473 (SVCDVNFGFNKISSVSLELCTLH), 474 to 495 (KLTHLDIRNNVLTSLPEEMEAL), 497 to 518 (RLQVINLSFNRFKVFPSVLYRM), 520 to 541 (ALETILLSNNQVGSIDPLQLKK), 544 to 565 (QLGTLDLQNNDLLQVPPELGNC), and 567 to 588 (TLRTLLLEGNPFRTPRAAILAK).

The polypeptide is Leucine-rich repeat-containing protein 40 (LRRC40) (Gallus gallus (Chicken)).